The following is a 151-amino-acid chain: S-protein homolog 1 (151 aa).

Residues 1 to 18 (MNCIKQFLLAICFSLALT) form the signal peptide.

It belongs to the plant self-incompatibility (S1) protein family. As to expression, restricted to floral tissues.

The protein localises to the secreted. The protein is S-protein homolog 1 of Arabidopsis thaliana (Mouse-ear cress).